The primary structure comprises 255 residues: Cytochrome c oxidase subunit 2 (255 aa).

Over 1 to 42 (MKFFFFSFINYKVLNDAARPWQIGFQDPATPIMEGIVNLHHD) the chain is Mitochondrial intermembrane. Residues 43–63 (IIFFLIIIIIFVSWILFRTLF) traverse the membrane as a helical segment. Over 64-83 (LFNSKTNPVAYNFSHGTFIE) the chain is Mitochondrial matrix. Residues 84–104 (LLWTLTPSLVLIGIAVPSFAL) traverse the membrane as a helical segment. Topologically, residues 105-255 (LYSIDEIIDP…IRWVQNKILD (151 aa)) are mitochondrial intermembrane. H187, C222, E224, C226, H230, and M233 together coordinate Cu cation. Mg(2+) is bound at residue E224.

The protein belongs to the cytochrome c oxidase subunit 2 family. As to quaternary structure, component of the cytochrome c oxidase (complex IV, CIV), a multisubunit enzyme composed of a catalytic core of 3 subunits and several supernumerary subunits. The complex exists as a monomer or a dimer and forms supercomplexes (SCs) in the inner mitochondrial membrane with ubiquinol-cytochrome c oxidoreductase (cytochrome b-c1 complex, complex III, CIII). The cofactor is Cu cation.

Its subcellular location is the mitochondrion inner membrane. It carries out the reaction 4 Fe(II)-[cytochrome c] + O2 + 8 H(+)(in) = 4 Fe(III)-[cytochrome c] + 2 H2O + 4 H(+)(out). Component of the cytochrome c oxidase, the last enzyme in the mitochondrial electron transport chain which drives oxidative phosphorylation. The respiratory chain contains 3 multisubunit complexes succinate dehydrogenase (complex II, CII), ubiquinol-cytochrome c oxidoreductase (cytochrome b-c1 complex, complex III, CIII) and cytochrome c oxidase (complex IV, CIV), that cooperate to transfer electrons derived from NADH and succinate to molecular oxygen, creating an electrochemical gradient over the inner membrane that drives transmembrane transport and the ATP synthase. Cytochrome c oxidase is the component of the respiratory chain that catalyzes the reduction of oxygen to water. Electrons originating from reduced cytochrome c in the intermembrane space (IMS) are transferred via the dinuclear copper A center (CU(A)) of subunit 2 and heme A of subunit 1 to the active site in subunit 1, a binuclear center (BNC) formed by heme A3 and copper B (CU(B)). The BNC reduces molecular oxygen to 2 water molecules using 4 electrons from cytochrome c in the IMS and 4 protons from the mitochondrial matrix. This chain is Cytochrome c oxidase subunit 2 (COX2), found in Cyanidium caldarium (Red alga).